Consider the following 233-residue polypeptide: tRNA (guanine-N(1)-)-methyltransferase (233 aa).

S-adenosyl-L-methionine is bound by residues G113 and 133–138; that span reads IGDYVL.

Belongs to the RNA methyltransferase TrmD family. In terms of assembly, homodimer.

The protein localises to the cytoplasm. The catalysed reaction is guanosine(37) in tRNA + S-adenosyl-L-methionine = N(1)-methylguanosine(37) in tRNA + S-adenosyl-L-homocysteine + H(+). Its function is as follows. Specifically methylates guanosine-37 in various tRNAs. This chain is tRNA (guanine-N(1)-)-methyltransferase, found in Ruminiclostridium cellulolyticum (strain ATCC 35319 / DSM 5812 / JCM 6584 / H10) (Clostridium cellulolyticum).